A 364-amino-acid polypeptide reads, in one-letter code: Lipoyl synthase, chloroplastic (364 aa).

The transit peptide at 1–70 (MEQTLFNPSI…PNVKKPEWLR (70 aa)) directs the protein to the chloroplast. Positions 32–52 (STNSPSSNTKTTTVTVPSKKT) are enriched in low complexity. The tract at residues 32–64 (STNSPSSNTKTTTVTVPSKKTMGPYTGRDPNVK) is disordered. Cys95, Cys100, Cys106, Cys126, Cys130, Cys133, and Ser341 together coordinate [4Fe-4S] cluster. The 222-residue stretch at 109–330 (GGGDGIATAT…KEYGESIGFR (222 aa)) folds into the Radical SAM core domain.

It belongs to the radical SAM superfamily. Lipoyl synthase family. It depends on [4Fe-4S] cluster as a cofactor.

The protein localises to the plastid. It localises to the chloroplast. The enzyme catalyses [[Fe-S] cluster scaffold protein carrying a second [4Fe-4S](2+) cluster] + N(6)-octanoyl-L-lysyl-[protein] + 2 oxidized [2Fe-2S]-[ferredoxin] + 2 S-adenosyl-L-methionine + 4 H(+) = [[Fe-S] cluster scaffold protein] + N(6)-[(R)-dihydrolipoyl]-L-lysyl-[protein] + 4 Fe(3+) + 2 hydrogen sulfide + 2 5'-deoxyadenosine + 2 L-methionine + 2 reduced [2Fe-2S]-[ferredoxin]. It participates in protein modification; protein lipoylation via endogenous pathway; protein N(6)-(lipoyl)lysine from octanoyl-[acyl-carrier-protein]: step 2/2. Its function is as follows. Catalyzes the radical-mediated insertion of two sulfur atoms into the C-6 and C-8 positions of the octanoyl moiety bound to the lipoyl domains of lipoate-dependent enzymes, thereby converting the octanoylated domains into lipoylated derivatives. The protein is Lipoyl synthase, chloroplastic of Ricinus communis (Castor bean).